The primary structure comprises 510 residues: NAD(P)H-quinone oxidoreductase subunit 2 B, chloroplastic (510 aa).

13 helical membrane passes run 24–44 (LLLF…GLIL), 57–77 (IPWL…ALLF), 99–119 (IFQF…VEYI), 124–144 (MAIT…MFLC), 149–169 (LITI…LSGY), 183–203 (YLLM…WLYG), 227–247 (PGIS…LSPA), 295–315 (WHLL…LIAI), 323–343 (MLAY…IVGD), 354–374 (YMLF…SFGL), 392–412 (AFLA…PPLA), 418–438 (LHLF…IGLL), and 482–502 (LSMI…NPII).

This sequence belongs to the complex I subunit 2 family. As to quaternary structure, NDH is composed of at least 16 different subunits, 5 of which are encoded in the nucleus.

It is found in the plastid. It localises to the chloroplast thylakoid membrane. The enzyme catalyses a plastoquinone + NADH + (n+1) H(+)(in) = a plastoquinol + NAD(+) + n H(+)(out). It catalyses the reaction a plastoquinone + NADPH + (n+1) H(+)(in) = a plastoquinol + NADP(+) + n H(+)(out). Functionally, NDH shuttles electrons from NAD(P)H:plastoquinone, via FMN and iron-sulfur (Fe-S) centers, to quinones in the photosynthetic chain and possibly in a chloroplast respiratory chain. The immediate electron acceptor for the enzyme in this species is believed to be plastoquinone. Couples the redox reaction to proton translocation, and thus conserves the redox energy in a proton gradient. This is NAD(P)H-quinone oxidoreductase subunit 2 B, chloroplastic from Morus indica (Mulberry).